The chain runs to 295 residues: Zinc finger transcription factor pqm-1 (295 aa).

The tract at residues 1–23 (MSFLNNDFGSPPATSSPPTTMPK) is disordered. Low complexity predominate over residues 10-22 (SPPATSSPPTTMP). A C2H2-type 1; degenerate zinc finger spans residues 161-183 (YMCTVCRKVYGRYNSVSYHVTIY). Residues 227–249 (RKCPHCRHVSKSPAMLEKHIRRH) form a C2H2-type 2 zinc finger.

It belongs to the krueppel C2H2-type zinc-finger protein family. Interacts with ceh-60.

The protein localises to the chromosome. It is found in the nucleus. The protein resides in the cytoplasm. Its function is as follows. Zinc finger transcription factor which acts as both a transcriptional activator and repressor. Binds to the promoters of genes that contain the 5'-CTTATCA-3' DNA consensus sequence in their regulatory region. Functions downstream of the Insulin/IGF-1-like signaling (IIS) mediated pathway. Involved in normal development, lifespan, stress response, lipid metabolism, innate immunity and exit from the developmentally arrested larval state known as dauer. Required for stress-induced expression of hsp-90 and resistance to heat stress, perhaps as part of a systemic stress signaling pathway. Involved in maintenance of proteostasis. Under hypoxic stress increases lipid levels by positively regulating fatty acid synthesis via fat-7 expression. Associates with homeobox protein ceh-60 at the promoters of some stress-responsive genes to regulate expression; may require phosphorylation for transcriptional repression activity. Acts downstream of nhr-14 to activate transcription of intestinal metal transporter smf-3, modulating innate immunity and iron uptake. May act downstream of the mTORC2 signaling mediated pathway. May act in a mutually exclusive manner with the FOXO transcription factor daf-16. This chain is Zinc finger transcription factor pqm-1, found in Caenorhabditis elegans.